We begin with the raw amino-acid sequence, 194 residues long: Imidazoleglycerol-phosphate dehydratase (194 aa).

It belongs to the imidazoleglycerol-phosphate dehydratase family.

The protein resides in the cytoplasm. It catalyses the reaction D-erythro-1-(imidazol-4-yl)glycerol 3-phosphate = 3-(imidazol-4-yl)-2-oxopropyl phosphate + H2O. It participates in amino-acid biosynthesis; L-histidine biosynthesis; L-histidine from 5-phospho-alpha-D-ribose 1-diphosphate: step 6/9. This Thermus thermophilus (strain ATCC 27634 / DSM 579 / HB8) protein is Imidazoleglycerol-phosphate dehydratase.